The primary structure comprises 134 residues: Small ribosomal subunit protein uS8c (134 aa).

This sequence belongs to the universal ribosomal protein uS8 family. As to quaternary structure, part of the 30S ribosomal subunit.

It localises to the plastid. The protein localises to the chloroplast. Its function is as follows. One of the primary rRNA binding proteins, it binds directly to 16S rRNA central domain where it helps coordinate assembly of the platform of the 30S subunit. This Aethionema grandiflorum (Persian stone-cress) protein is Small ribosomal subunit protein uS8c (rps8).